The primary structure comprises 395 residues: Cytoplasmic tRNA 2-thiolation protein 1 (395 aa).

Residues 297–309 show a composition bias toward basic residues; sequence TVAYKNKNKNKKK. The disordered stretch occupies residues 297–335; that stretch reads TVAYKNKNKNKKKSNSEQEEQEKQEQEVNPDGSISLNRN.

This sequence belongs to the TtcA family. CTU1/NCS6/ATPBD3 subfamily.

It is found in the cytoplasm. The protein operates within tRNA modification; 5-methoxycarbonylmethyl-2-thiouridine-tRNA biosynthesis. In terms of biological role, plays a central role in 2-thiolation of mcm(5)S(2)U at tRNA wobble positions of tRNA(Lys), tRNA(Glu) and tRNA(Gln). Directly binds tRNAs and probably acts by catalyzing adenylation of tRNAs, an intermediate required for 2-thiolation. It is unclear whether it acts as a sulfurtransferase that transfers sulfur from thiocarboxylated URM1 onto the uridine of tRNAs at wobble position. Prior mcm(5) tRNA modification by the elongator complex is required for 2-thiolation. May also be involved in protein urmylation. The polypeptide is Cytoplasmic tRNA 2-thiolation protein 1 (Candida albicans (strain SC5314 / ATCC MYA-2876) (Yeast)).